Reading from the N-terminus, the 236-residue chain is Methylosome subunit pICln (236 aa).

S2 is subject to N-acetylserine. The interval 88–109 is disordered; it reads EESKEPPSDEDEEDNDDIEPIS. A phosphoserine mark is found at S95, S143, S192, S194, S197, and S209. The segment covering 95–107 has biased composition (acidic residues); it reads SDEDEEDNDDIEP. T222 is subject to Phosphothreonine.

The protein belongs to the pICln (TC 1.A.47) family. In terms of assembly, component of the methylosome, a 20S complex containing at least PRMT5/SKB1, WDR77/MEP50 and CLNS1A/pICln. May mediate SNRPD1 and SNRPD3 methylation. Forms a 6S pICln-Sm complex composed of CLNS1A/pICln, SNRPD1, SNRPD2, SNRPE, SNRPF and SNRPG; ring-like structure where CLNS1A/pICln mimics additional Sm proteins and which is unable to assemble into the core snRNP. Interacts with LSM10 and LSM11.

It localises to the cytoplasm. The protein localises to the cytosol. Its subcellular location is the nucleus. It is found in the cytoskeleton. Its function is as follows. Involved in both the assembly of spliceosomal snRNPs and the methylation of Sm proteins. Chaperone that regulates the assembly of spliceosomal U1, U2, U4 and U5 small nuclear ribonucleoproteins (snRNPs), the building blocks of the spliceosome, and thereby plays an important role in the splicing of cellular pre-mRNAs. Most spliceosomal snRNPs contain a common set of Sm proteins SNRPB, SNRPD1, SNRPD2, SNRPD3, SNRPE, SNRPF and SNRPG that assemble in a heptameric protein ring on the Sm site of the small nuclear RNA to form the core snRNP (Sm core). In the cytosol, the Sm proteins SNRPD1, SNRPD2, SNRPE, SNRPF and SNRPG are trapped in an inactive 6S pICln-Sm complex by the chaperone CLNS1A that controls the assembly of the core snRNP. Dissociation by the SMN complex of CLNS1A from the trapped Sm proteins and their transfer to an SMN-Sm complex triggers the assembly of core snRNPs and their transport to the nucleus. This chain is Methylosome subunit pICln (Clns1a), found in Mus musculus (Mouse).